The sequence spans 369 residues: Tetraacyldisaccharide 4'-kinase (369 aa).

68–75 (VVGGTGKT) contacts ATP.

The protein belongs to the LpxK family.

It catalyses the reaction a lipid A disaccharide + ATP = a lipid IVA + ADP + H(+). The protein operates within glycolipid biosynthesis; lipid IV(A) biosynthesis; lipid IV(A) from (3R)-3-hydroxytetradecanoyl-[acyl-carrier-protein] and UDP-N-acetyl-alpha-D-glucosamine: step 6/6. Transfers the gamma-phosphate of ATP to the 4'-position of a tetraacyldisaccharide 1-phosphate intermediate (termed DS-1-P) to form tetraacyldisaccharide 1,4'-bis-phosphate (lipid IVA). The chain is Tetraacyldisaccharide 4'-kinase from Chlamydia muridarum (strain MoPn / Nigg).